Here is a 424-residue protein sequence, read N- to C-terminus: Histidine--tRNA ligase (424 aa).

Belongs to the class-II aminoacyl-tRNA synthetase family. Homodimer.

It is found in the cytoplasm. The enzyme catalyses tRNA(His) + L-histidine + ATP = L-histidyl-tRNA(His) + AMP + diphosphate + H(+). The protein is Histidine--tRNA ligase of Escherichia coli O17:K52:H18 (strain UMN026 / ExPEC).